Consider the following 95-residue polypeptide: FXYD domain-containing ion transport regulator 6 (95 aa).

Residues 1–18 form the signal peptide; the sequence is MELVLVFLCSLLAPMVLA. Residues 19–35 are Extracellular-facing; that stretch reads SAAEKEKEMDPFHYDYQ. A helical membrane pass occupies residues 36 to 57; it reads TLRIGGLVFAVVLFSVGILLIL. Residues 58–95 lie on the Cytoplasmic side of the membrane; that stretch reads SRRCKCSFNQKPRAPGDEEAQVENLITANATEPQKAEN. The interval 69–95 is disordered; sequence PRAPGDEEAQVENLITANATEPQKAEN.

Belongs to the FXYD family. Regulatory subunit of the sodium/potassium-transporting ATPase which is composed of a catalytic alpha subunit, a non-catalytic beta subunit and an additional regulatory subunit. The regulatory subunit, a member of the FXYD protein family, modulates the enzymatic activity in a tissue- and isoform-specific way by changing affinities of the Na+/K+-ATPase toward Na(+), K(+) or ATP.

It is found in the cell membrane. Associates with and regulates the activity of the sodium/potassium-transporting ATPase (NKA) which catalyzes the hydrolysis of ATP coupled with the exchange of Na(+) and K(+) ions across the plasma membrane. Reduces the apparent affinity for intracellular Na(+) with no change in the apparent affinity for extracellular K(+). In addition to modulating NKA kinetics, may also function as a regulator of NKA localization to the plasma membrane. The sequence is that of FXYD domain-containing ion transport regulator 6 from Homo sapiens (Human).